We begin with the raw amino-acid sequence, 329 residues long: Putative methylthioribose-1-phosphate isomerase (329 aa).

Substrate contacts are provided by residues 50–52 (RGA), arginine 84, and glutamine 182. Catalysis depends on aspartate 223, which acts as the Proton donor. 233–234 (NK) provides a ligand contact to substrate.

Belongs to the eIF-2B alpha/beta/delta subunits family. MtnA subfamily.

It catalyses the reaction 5-(methylsulfanyl)-alpha-D-ribose 1-phosphate = 5-(methylsulfanyl)-D-ribulose 1-phosphate. Its function is as follows. Catalyzes the interconversion of methylthioribose-1-phosphate (MTR-1-P) into methylthioribulose-1-phosphate (MTRu-1-P). The sequence is that of Putative methylthioribose-1-phosphate isomerase from Methanocaldococcus jannaschii (strain ATCC 43067 / DSM 2661 / JAL-1 / JCM 10045 / NBRC 100440) (Methanococcus jannaschii).